Here is a 380-residue protein sequence, read N- to C-terminus: Queuine tRNA-ribosyltransferase (380 aa).

Catalysis depends on aspartate 93, which acts as the Proton acceptor. Substrate is bound by residues 93–97 (DSGGF), aspartate 147, glutamine 198, and glycine 225. The tract at residues 256–262 (GVGLPSN) is RNA binding. The Nucleophile role is filled by aspartate 275. An RNA binding; important for wobble base 34 recognition region spans residues 280–284 (ARNGR). Residues cysteine 313, cysteine 315, cysteine 318, and histidine 344 each coordinate Zn(2+).

It belongs to the queuine tRNA-ribosyltransferase family. In terms of assembly, homodimer. Within each dimer, one monomer is responsible for RNA recognition and catalysis, while the other monomer binds to the replacement base PreQ1. Requires Zn(2+) as cofactor.

It catalyses the reaction 7-aminomethyl-7-carbaguanine + guanosine(34) in tRNA = 7-aminomethyl-7-carbaguanosine(34) in tRNA + guanine. The protein operates within tRNA modification; tRNA-queuosine biosynthesis. In terms of biological role, catalyzes the base-exchange of a guanine (G) residue with the queuine precursor 7-aminomethyl-7-deazaguanine (PreQ1) at position 34 (anticodon wobble position) in tRNAs with GU(N) anticodons (tRNA-Asp, -Asn, -His and -Tyr). Catalysis occurs through a double-displacement mechanism. The nucleophile active site attacks the C1' of nucleotide 34 to detach the guanine base from the RNA, forming a covalent enzyme-RNA intermediate. The proton acceptor active site deprotonates the incoming PreQ1, allowing a nucleophilic attack on the C1' of the ribose to form the product. After dissociation, two additional enzymatic reactions on the tRNA convert PreQ1 to queuine (Q), resulting in the hypermodified nucleoside queuosine (7-(((4,5-cis-dihydroxy-2-cyclopenten-1-yl)amino)methyl)-7-deazaguanosine). This chain is Queuine tRNA-ribosyltransferase, found in Clostridium perfringens (strain 13 / Type A).